Consider the following 291-residue polypeptide: N-acetylmannosamine kinase (291 aa).

Residues 5-12 and 132-139 contribute to the ATP site; these read AIDIGGTK and GVGGGVVS. The Zn(2+) site is built by His156, Cys166, Cys168, and Cys173.

Belongs to the ROK (NagC/XylR) family. NanK subfamily. Homodimer.

It carries out the reaction an N-acyl-D-mannosamine + ATP = an N-acyl-D-mannosamine 6-phosphate + ADP + H(+). Its pathway is amino-sugar metabolism; N-acetylneuraminate degradation; D-fructose 6-phosphate from N-acetylneuraminate: step 2/5. In terms of biological role, catalyzes the phosphorylation of N-acetylmannosamine (ManNAc) to ManNAc-6-P. The sequence is that of N-acetylmannosamine kinase from Shigella boydii serotype 18 (strain CDC 3083-94 / BS512).